The chain runs to 463 residues: Glutamate--tRNA ligase 2 (463 aa).

The 'HIGH' region motif lies at 10-20; it reads PSPTGFLHIGS. A 'KMSKS' region motif is present at residues 239 to 243; it reads KLSKR. Position 242 (Lys-242) interacts with ATP.

The protein belongs to the class-I aminoacyl-tRNA synthetase family. Glutamate--tRNA ligase type 1 subfamily. Monomer.

The protein resides in the cytoplasm. It carries out the reaction tRNA(Glu) + L-glutamate + ATP = L-glutamyl-tRNA(Glu) + AMP + diphosphate. Catalyzes the attachment of glutamate to tRNA(Glu) in a two-step reaction: glutamate is first activated by ATP to form Glu-AMP and then transferred to the acceptor end of tRNA(Glu). The protein is Glutamate--tRNA ligase 2 of Rickettsia akari (strain Hartford).